The primary structure comprises 653 residues: DNA ligase (653 aa).

NAD(+) contacts are provided by residues 32–36 (NFEYD) and 80–81 (SL). Residue Lys-104 is the N6-AMP-lysine intermediate of the active site. NAD(+)-binding residues include Arg-125, Glu-159, and Lys-297. Residues Cys-386, Cys-389, Cys-406, and Cys-411 each coordinate Zn(2+). Residues 571–653 (GGSEKLKGLT…EEFIQLLNEA (83 aa)) form the BRCT domain.

This sequence belongs to the NAD-dependent DNA ligase family. LigA subfamily. Requires Mg(2+) as cofactor. The cofactor is Mn(2+).

It catalyses the reaction NAD(+) + (deoxyribonucleotide)n-3'-hydroxyl + 5'-phospho-(deoxyribonucleotide)m = (deoxyribonucleotide)n+m + AMP + beta-nicotinamide D-nucleotide.. Its function is as follows. DNA ligase that catalyzes the formation of phosphodiester linkages between 5'-phosphoryl and 3'-hydroxyl groups in double-stranded DNA using NAD as a coenzyme and as the energy source for the reaction. It is essential for DNA replication and repair of damaged DNA. The protein is DNA ligase of Lachnoclostridium phytofermentans (strain ATCC 700394 / DSM 18823 / ISDg) (Clostridium phytofermentans).